The primary structure comprises 1321 residues: Serine/threonine-protein kinase SIK3 (1321 aa).

The segment at 1–59 is disordered; sequence MAAAAASGAGGAAGAGTGGAGPAGRLLPPPAPGSPAAPAAVSPAAGQPRPPAPASRGPM. A compositionally biased stretch (gly residues) spans 8–22; the sequence is GAGGAAGAGTGGAGP. Positions 36–47 are enriched in low complexity; sequence AAPAAVSPAAGQ. One can recognise a Protein kinase domain in the interval 66 to 317; sequence YEIDRTIGKG…MEQICKHKWM (252 aa). T71 carries the post-translational modification Phosphothreonine. ATP contacts are provided by residues 72-80 and K95; that span reads IGKGNFAVV. At E113 the chain carries Phosphothreonine. D188 functions as the Proton acceptor in the catalytic mechanism. Phosphothreonine; by LKB1 is present on T221. In terms of domain architecture, UBA spans 344–384; sequence PLNEDVLLAMEDMGLDKEQTLQSLRSDAYDHYSAIYSLLCD. Residue T469 is modified to Phosphothreonine. Residues S551, S591, and S592 each carry the phosphoserine modification. Residues 585–614 are disordered; sequence TPVDEESSDGEPDQEAVQSSTYKDSNTLHL. Over residues 587–598 the composition is skewed to acidic residues; sequence VDEESSDGEPDQ. Over residues 600-613 the composition is skewed to polar residues; sequence AVQSSTYKDSNTLH. 2 positions are modified to phosphoserine: S626 and S647. Residues 727–772 are disordered; that stretch reads IQPSSPPPNHPNNHLFRQPSNSPPPMSSAMIQPHGAASSSQFQGLP. A compositionally biased stretch (polar residues) spans 763 to 772; sequence ASSSQFQGLP. S866 carries the post-translational modification Phosphoserine. The tract at residues 894–945 is disordered; sequence LFSDQSRGSPSSYSPSTGVGFSPTQALKVPPLDQFPTFPPSAHQQPPHYTTS. Positions 896–909 are enriched in low complexity; it reads SDQSRGSPSSYSPS. Residues 935–945 show a composition bias toward polar residues; sequence AHQQPPHYTTS. S978 is subject to Phosphoserine. At R986 the chain carries Omega-N-methylarginine. A compositionally biased stretch (polar residues) spans 1256-1265; that stretch reads SLMGSQQFQD. Residues 1256–1289 form a disordered region; the sequence is SLMGSQQFQDGENEECGASLGGHEHPDLSDGSQH.

The protein belongs to the protein kinase superfamily. CAMK Ser/Thr protein kinase family. SNF1 subfamily. In terms of assembly, binds to and is activated by YWHAZ when phosphorylated on Thr-221. Interacts with 14-3-3 proteins. Interacts with HDAC4; this interaction leads to HDAC4 retention in the cytoplasm. Interacts with DEPTOR, MLST8/GbetaL, RICTOR and RPTOR. Mg(2+) serves as cofactor. Phosphorylated at Thr-221 by STK11/LKB1 in complex with STE20-related adapter-alpha (STRADA) pseudo kinase and CAB39. Phosphorylation at Thr-221 is inhibited in response to PTHLH/PTHrP. Phosphorylated at Thr-469 and Ser-551 in response to cAMP signaling. In terms of tissue distribution, expressed in chondrocytes.

Its subcellular location is the cytoplasm. It catalyses the reaction L-seryl-[protein] + ATP = O-phospho-L-seryl-[protein] + ADP + H(+). The enzyme catalyses L-threonyl-[protein] + ATP = O-phospho-L-threonyl-[protein] + ADP + H(+). With respect to regulation, activated by phosphorylation on Thr-221. Functionally, positive regulator of mTOR signaling that functions by triggering the degradation of DEPTOR, an mTOR inhibitor. Involved in the dynamic regulation of mTOR signaling in chondrocyte differentiation during skeletogenesis. Negatively regulates cAMP signaling pathway possibly by acting on CRTC2/TORC2 and CRTC3/TORC3. Prevents HDAC4 translocation to the nucleus. This Homo sapiens (Human) protein is Serine/threonine-protein kinase SIK3.